The following is a 495-amino-acid chain: MGQFISFMQEIPIFLQEALNIALVAVSLICIVKGLVNLYRCGLFQLMVFLVLAGRSCSEETFKIGMHTKFQEVSLSLSALLTNQSHELPMLCLANKTHLYLKSGRSSFKINIDSVTVLTRSEVNLTSINLTRSIDVFVHSPKLGSCFESDEEWVVAWWIEAIGHRWDQDPGLLCRNKTKTEGKLIQINISRADGNVHYGWRLKNGLDHIYRGREEPCFEGEQCLIKIQPEDWPTDCKADHTNTFRFLSRSQKSIAVGRTLKAFFSWSLTDPLGNEAPGGYCLEKWMLVASELKCFGNTAIAKCNQNHDSEFCDMLRLFDYNKNAIKTLNEETKTRVNVLSHTINALISDNLLMKNKIRELMSVPYCNYTRFWYVNHTLSGQHSLPRCWMIRNNSYLNSSEFRNEWILESDFLISEMLGKEYSERQGRTPITLVDICFWSTVFFTSTLFLHLIGFPTHEHIRGEGCPLPHRLNSMGGCRCGKYLPLKKPTIWHRRH.

Gly2 is lipidated: N-myristoyl glycine; by host. Residues 2 to 17 are Extracellular-facing; the sequence is GQFISFMQEIPIFLQE. Residues 18–33 traverse the membrane as a helical segment; that stretch reads ALNIALVAVSLICIVK. The Cytoplasmic portion of the chain corresponds to 34 to 58; sequence GLVNLYRCGLFQLMVFLVLAGRSCS. Cys57 is a Zn(2+) binding site. Residues 59-434 lie on the Extracellular side of the membrane; that stretch reads EETFKIGMHT…QGRTPITLVD (376 aa). Disulfide bonds link Cys92-Cys236, Cys281-Cys294, Cys303-Cys312, and Cys366-Cys387. N-linked (GlcNAc...) asparagine; by host glycosylation is found at Asn95 and Asn188. Residues Asn367, Asn375, Asn392, and Asn397 are each glycosylated (N-linked (GlcNAc...) asparagine; by host). A helical transmembrane segment spans residues 435-455; it reads ICFWSTVFFTSTLFLHLIGFP. The Cytoplasmic portion of the chain corresponds to 456–495; that stretch reads THEHIRGEGCPLPHRLNSMGGCRCGKYLPLKKPTIWHRRH. Zn(2+)-binding residues include His457, His459, Cys465, His469, Cys477, Cys479, and His495.

It belongs to the arenaviridae GPC protein family. Interacts with glycoprotein G2. Part of the GP complex (GP-C) together with glycoprotein G1 and glycoprotein G2. The GP-complex interacts with protein Z, which interacts with ribonucleocapsid; these interactions may induce virion budding. As to quaternary structure, homotrimer; disulfide-linked. In pre-fusion state, G1 homotrimers bind G2 homotrimers via ionic interactions. Part of the GP complex (GP-C) together with glycoprotein G2 and the stable signal peptide. The GP-complex interacts with protein Z, which interacts with ribonucleocapsid; these interactions may induce virion budding. In terms of assembly, homotrimer. Interacts with the stable signal peptide. In pre-fusion state, G2 homotrimers bind G1 homotrimers via ionic interactions. Part of the GP complex (GP-C) together with glycoprotein G1 and the stable signal peptide. Acidification in the endosome triggers rearrangements, which ultimately leads to a 6 helix bundle formed by the two heptad repeat domains (HR1 and HR2) in post-fusion state. The GP-complex interacts with protein Z, which interacts with ribonucleocapsid; these interactions may induce virion budding. In terms of processing, specific enzymatic cleavages in vivo yield mature proteins. GP-C polyprotein is cleaved in the endoplasmic reticulum by the host protease MBTPS1. Only cleaved glycoprotein is incorporated into virions. Post-translationally, the SSP remains stably associated with the GP complex following cleavage by signal peptidase and plays crucial roles in the trafficking of GP through the secretory pathway. Myristoylation is necessary for GP2-mediated fusion activity.

It localises to the virion membrane. It is found in the host endoplasmic reticulum membrane. The protein resides in the host Golgi apparatus membrane. The protein localises to the host cell membrane. Functions as a cleaved signal peptide that is retained as the third component of the GP complex (GP-C). Helps to stabilize the spike complex in its native conformation. The SSP is required for efficient glycoprotein expression, post-translational maturation cleavage of G1 and G2, glycoprotein transport to the cell surface plasma membrane, formation of infectious virus particles, and acid pH-dependent glycoprotein-mediated cell fusion. Its function is as follows. Forms the virion spikes together with glycoprotein G2. The glycoprotein spike trimers are connected to the underlying matrix. Interacts with the host receptor leading to virus endocytosis. In terms of biological role, forms the virion spikes together with glycoprotein G1. The glycoprotein spike trimers are connected to the underlying matrix. Class I viral fusion protein that directs fusion of viral and host endosomal membranes, leading to delivery of the nucleocapsid into the cytoplasm. Membrane fusion is mediated by irreversible conformational changes induced by acidification. The protein is Pre-glycoprotein polyprotein GP complex of Tacaribe virus (strain Franze-Fernandez) (TCRV).